Here is a 380-residue protein sequence, read N- to C-terminus: O-phospho-L-seryl-tRNA:Cys-tRNA synthase (380 aa).

Residues alanine 86–arginine 87, asparagine 192, and serine 215–histidine 217 each bind pyridoxal 5'-phosphate. Lysine 218 is modified (N6-(pyridoxal phosphate)lysine).

The protein belongs to the SepCysS family. In terms of assembly, homodimer. Interacts with SepRS. The cofactor is pyridoxal 5'-phosphate.

It carries out the reaction O-phospho-L-seryl-tRNA(Cys) + hydrogen sulfide + H(+) = L-cysteinyl-tRNA(Cys) + phosphate. In terms of biological role, converts O-phospho-L-seryl-tRNA(Cys) (Sep-tRNA(Cys)) to L-cysteinyl-tRNA(Cys) (Cys-tRNA(Cys)). The protein is O-phospho-L-seryl-tRNA:Cys-tRNA synthase of Methanococcus maripaludis (strain C5 / ATCC BAA-1333).